Consider the following 503-residue polypeptide: Hexose transporter 1 (503 aa).

Residues 1-26 are Cytoplasmic-facing; it reads MKKSSKEISPSQSLKNGGSDHFFNTS. Residues 27–47 traverse the membrane as a helical segment; the sequence is LMYVLAACLASFIFGYQVSVL. At 48 to 76 the chain is on the extracellular side; that stretch reads NTIKNFIVIEFGWCTGNKVECDDSTLKSS. C61 and C68 are disulfide-bonded. The helical transmembrane segment at 77–97 threads the bilayer; sequence FLLASVFIGAVVGSGFSDYLV. At 98–102 the chain is on the cytoplasmic side; the sequence is QHGRR. A helical membrane pass occupies residues 103–123; the sequence is FSLLVIYNFFILVSILTSITH. Topologically, residues 124-132 are extracellular; the sequence is HFHTILFSR. A helical transmembrane segment spans residues 133 to 153; sequence LLSGFGVGLITVSVPMYISEM. Residues 154–163 are Cytoplasmic-facing; sequence THKDKKGAYG. Residues 164–184 form a helical membrane-spanning segment; the sequence is VLHQLFITFGILVAVLLGMAM. Q167 lines the alpha-D-glucose pocket. A beta-D-glucose-binding site is contributed by Q167. Topologically, residues 185 to 205 are extracellular; sequence GEAPDAKSVDALGEFQKIWWR. The helical transmembrane segment at 206-226 threads the bilayer; it reads LMFFFPCLISILGIVLLTFFY. Residues 227–291 lie on the Cytoplasmic side of the membrane; the sequence is KEETPYYLFE…RAMQIPSYRN (65 aa). Residues 292–312 traverse the membrane as a helical segment; the sequence is VILLGCILSGLQQFTGINVLV. Alpha-D-glucose contacts are provided by Q303, Q304, and N309. Q303 contacts beta-D-glucose. Residue N309 participates in beta-D-glucose binding. Residues 313–329 lie on the Extracellular side of the membrane; that stretch reads SNSNELYKEFLSNKLIT. The chain crosses the membrane as a helical span at residues 330 to 350; sequence TLSVIMTVVNFLMTFPAIYIV. N339 is a binding site for beta-D-glucose. The Cytoplasmic segment spans residues 351-356; sequence EKLGRK. Residues 357–377 form a helical membrane-spanning segment; it reads TLLLCGCAGVTLAAFLPTAIA. The Extracellular portion of the chain corresponds to 378–391; the sequence is NQIDRSSDLVRNLS. The helical transmembrane segment at 392-412 threads the bilayer; that stretch reads IAATFVMIISFAVSYGPVLWI. Residue W411 participates in alpha-D-glucose binding. Residues 413-428 lie on the Cytoplasmic side of the membrane; that stretch reads YLHEMFPSEIKDSAAS. The chain crosses the membrane as a helical span at residues 429 to 449; the sequence is LASLVNWVCAIIVVFPSDIII. Residues 450–454 are Extracellular-facing; the sequence is KKSPT. The chain crosses the membrane as a helical span at residues 455–475; the sequence is ILFFIFSGMSILSFLFIFFFI. Residues 476–503 are Cytoplasmic-facing; the sequence is KETKGGEIGTSPYITMEERQKHMGKSAV.

Belongs to the major facilitator superfamily. Sugar transporter (TC 2.A.1.1) family. In terms of assembly, homodimer.

Its subcellular location is the cell membrane. It carries out the reaction D-glucose(out) = D-glucose(in). The enzyme catalyses D-fructose(out) = D-fructose(in). The catalysed reaction is D-galactose(in) = D-galactose(out). It catalyses the reaction D-mannose(out) = D-mannose(in). It carries out the reaction D-glucosamine(out) = D-glucosamine(in). The enzyme catalyses D-xylose(out) = D-xylose(in). With respect to regulation, inhibited by compound 3361 (3-O-((undec-10-en)-1-yl)-D-glucose). Its function is as follows. Sodium-independent facilitative hexose transporter. Can transport D-glucose and D-fructose. Can transport D-mannose, D-galactose, D-xylose and D-glucosamine. The protein is Hexose transporter 1 of Plasmodium vivax.